The following is a 376-amino-acid chain: Queuine tRNA-ribosyltransferase (376 aa).

D93 functions as the Proton acceptor in the catalytic mechanism. Substrate contacts are provided by residues 93–97 (DSGGF), D147, Q190, and G217. The RNA binding stretch occupies residues 248–254 (GVGKPDD). The Nucleophile role is filled by D267. Zn(2+)-binding residues include C305, C307, C310, and H336.

The protein belongs to the queuine tRNA-ribosyltransferase family. As to quaternary structure, homodimer. Within each dimer, one monomer is responsible for RNA recognition and catalysis, while the other monomer binds to the replacement base PreQ1. Requires Zn(2+) as cofactor.

The enzyme catalyses 7-aminomethyl-7-carbaguanine + guanosine(34) in tRNA = 7-aminomethyl-7-carbaguanosine(34) in tRNA + guanine. It functions in the pathway tRNA modification; tRNA-queuosine biosynthesis. Catalyzes the base-exchange of a guanine (G) residue with the queuine precursor 7-aminomethyl-7-deazaguanine (PreQ1) at position 34 (anticodon wobble position) in tRNAs with GU(N) anticodons (tRNA-Asp, -Asn, -His and -Tyr). Catalysis occurs through a double-displacement mechanism. The nucleophile active site attacks the C1' of nucleotide 34 to detach the guanine base from the RNA, forming a covalent enzyme-RNA intermediate. The proton acceptor active site deprotonates the incoming PreQ1, allowing a nucleophilic attack on the C1' of the ribose to form the product. After dissociation, two additional enzymatic reactions on the tRNA convert PreQ1 to queuine (Q), resulting in the hypermodified nucleoside queuosine (7-(((4,5-cis-dihydroxy-2-cyclopenten-1-yl)amino)methyl)-7-deazaguanosine). This Ruegeria sp. (strain TM1040) (Silicibacter sp.) protein is Queuine tRNA-ribosyltransferase.